Here is a 365-residue protein sequence, read N- to C-terminus: Outer capsid protein sigma-3 (365 aa).

A CCHC-type zinc finger spans residues 51 to 73 (CMHCLGVVGSLQRKLKHLPHHRC).

Belongs to the orthoreovirus sigma-3 protein family. As to quaternary structure, heterohexamer of three sigma-3 and three Mu-1 proteins. The RNA-binding form is probably a homodimer. Cleaved during virus the endosomal proteolytic disassembly of the outer capsid.

The protein localises to the virion. The protein resides in the host cytoplasm. Its subcellular location is the host nucleus. In terms of biological role, stimulates translation by blocking the activation of the dsRNA-dependent protein kinase EIF2AK2/PKR, thereby inhibiting the host interferon response. Sigma3 prevents the activation of EIF2AK2 by competing with the kinase for dsRNA-binding. Functionally, the viral outer shell polypeptides, of which sigma-3 is one, impose structural constraints that prevent elongation of nascent transcripts by the RNA-dependent RNA polymerase lambda-3. The polypeptide is Outer capsid protein sigma-3 (S4) (Reovirus type 3 (strain Dearing) (T3D)).